Reading from the N-terminus, the 350-residue chain is Chlorophyll a/b light-harvesting protein PcbA (350 aa).

Helical transmembrane passes span 26–46, 62–82, 87–107, 214–234, 248–268, and 309–329; these read LSAH…ITLF, LILI…GQVV, YFVI…GALY, IAVV…FPWA, LSAS…FSAV, and LCNV…WHAL.

It belongs to the PsbB/PsbC family. IsiA/Pcb subfamily. As to quaternary structure, the antenna complex consists of chlorophylls (a and b) and chlorophyll a/b binding proteins. Requires chlorophyll a as cofactor. The cofactor is chlorophyll b.

It localises to the cellular thylakoid membrane. In terms of biological role, the antenna complex functions as a light receptor, it captures and delivers excitation energy to photosystems II and I. The Prochlorales pcb genes are not related to higher plant LHCs. This chain is Chlorophyll a/b light-harvesting protein PcbA (pcbA), found in Prochlorothrix hollandica.